A 327-amino-acid polypeptide reads, in one-letter code: RNA ligase 1 (327 aa).

The cofactor is Mg(2+). Mn(2+) serves as cofactor. In terms of processing, AMPylates itself (auto-AMPylation).

It catalyses the reaction ATP + (ribonucleotide)n-3'-hydroxyl + 5'-phospho-(ribonucleotide)m = (ribonucleotide)n+m + AMP + diphosphate.. Functionally, functions as an RNA ligase, in vitro. The ligation reaction entails three nucleotidyl transfer steps. In the first step, the RNA ligase reacts with ATP in the absence of nucleic acid to form a covalent ligase-AMP intermediate and release pyrophosphate. In step 2, the ligase-AMP binds to the nucleic acid and transfers the adenylate to the 5'-PO4 terminus to form an adenylylated intermediate. In step 3, the RNA ligase directs the attack of the 3'-OH on the 5'-phosphoanhydride linkage, resulting in a repaired 3'-5' phosphodiester and release of AMP. Exhibits selectivity for single-stranded RNA substrates and may not have nick-sealing activity on double-stranded DNA-RNA hybrids. May play a role in maintaining RNA integrity under stress conditions, for example in response to reactive oxygen species (ROS). The chain is RNA ligase 1 from Mus musculus (Mouse).